Reading from the N-terminus, the 617-residue chain is Phenylalanine--tRNA ligase beta subunit (617 aa).

Residues 306 to 383 (IQEKQINAQV…IGYGYDNLKK (78 aa)) enclose the B5 domain. Mg(2+)-binding residues include Asp-361, Asp-367, Glu-370, and Asp-371.

It belongs to the phenylalanyl-tRNA synthetase beta subunit family. Type 2 subfamily. As to quaternary structure, tetramer of two alpha and two beta subunits. Requires Mg(2+) as cofactor.

The protein localises to the cytoplasm. The enzyme catalyses tRNA(Phe) + L-phenylalanine + ATP = L-phenylalanyl-tRNA(Phe) + AMP + diphosphate + H(+). This Dictyostelium discoideum (Social amoeba) protein is Phenylalanine--tRNA ligase beta subunit (phesB).